A 159-amino-acid chain; its full sequence is Ribosomal RNA large subunit methyltransferase H (159 aa).

S-adenosyl-L-methionine contacts are provided by residues Leu-76, Gly-108, and 127-132; that span reads FGLLTL.

It belongs to the RNA methyltransferase RlmH family. Homodimer.

It localises to the cytoplasm. The enzyme catalyses pseudouridine(1915) in 23S rRNA + S-adenosyl-L-methionine = N(3)-methylpseudouridine(1915) in 23S rRNA + S-adenosyl-L-homocysteine + H(+). In terms of biological role, specifically methylates the pseudouridine at position 1915 (m3Psi1915) in 23S rRNA. The protein is Ribosomal RNA large subunit methyltransferase H of Streptococcus pyogenes serotype M12 (strain MGAS2096).